A 374-amino-acid chain; its full sequence is Dual-specificity RNA methyltransferase RlmN (374 aa).

Residue glutamate 94 is the Proton acceptor of the active site. The Radical SAM core domain occupies 100-339 (EEDRATLCVS…VTIRKTRGDD (240 aa)). A disulfide bond links cysteine 107 and cysteine 344. [4Fe-4S] cluster-binding residues include cysteine 114, cysteine 118, and cysteine 121. S-adenosyl-L-methionine is bound by residues 168–169 (GE), serine 200, 222–224 (SLH), and asparagine 301. Residue cysteine 344 is the S-methylcysteine intermediate of the active site.

Belongs to the radical SAM superfamily. RlmN family. The cofactor is [4Fe-4S] cluster.

It localises to the cytoplasm. It carries out the reaction adenosine(2503) in 23S rRNA + 2 reduced [2Fe-2S]-[ferredoxin] + 2 S-adenosyl-L-methionine = 2-methyladenosine(2503) in 23S rRNA + 5'-deoxyadenosine + L-methionine + 2 oxidized [2Fe-2S]-[ferredoxin] + S-adenosyl-L-homocysteine. The enzyme catalyses adenosine(37) in tRNA + 2 reduced [2Fe-2S]-[ferredoxin] + 2 S-adenosyl-L-methionine = 2-methyladenosine(37) in tRNA + 5'-deoxyadenosine + L-methionine + 2 oxidized [2Fe-2S]-[ferredoxin] + S-adenosyl-L-homocysteine. Functionally, specifically methylates position 2 of adenine 2503 in 23S rRNA and position 2 of adenine 37 in tRNAs. m2A2503 modification seems to play a crucial role in the proofreading step occurring at the peptidyl transferase center and thus would serve to optimize ribosomal fidelity. The sequence is that of Dual-specificity RNA methyltransferase RlmN from Vibrio vulnificus (strain YJ016).